A 500-amino-acid polypeptide reads, in one-letter code: Probable cation transporter HKT1;4 (500 aa).

The Cytoplasmic segment spans residues 1–12 (MPTSRRALAGGA). 2 consecutive transmembrane segments (helical) span residues 13–33 (LSMHVAYFLAISCLGYGLLGV) and 74–94 (LVVLTVLMLLGGEVFVSLVGL). Topologically, residues 95-156 (ASKWSKLRSD…ADTLRHNAVR (62 aa)) are cytoplasmic. Residues 121–145 (ADIDGGDVENPTSSGEEAASRRRPM) form a disordered region. A run of 2 helical transmembrane segments spans residues 157-177 (ALFYIVLAIFAVVHVVGAVAV) and 239-259 (VLAGNTLFAPLLAACVWAAAA). Residues 260–290 (ATRREELVEMAREGGRAAAAGYAHLMPARRC) lie on the Cytoplasmic side of the membrane. The next 2 helical transmembrane spans lie at 291–311 (WMLAATVAAFVAVLMALVCGM) and 346–366 (LSILAPAILVLFVLMMYLPPY). Over 367-390 (TTWFPFEENSTTKDSNAENQGIRL) the chain is Cytoplasmic. Helical transmembrane passes span 391–411 (LESTLLSQLSYLTIFVIAICI) and 464–484 (GFVGRWSDSGKLILIFVMFFG). Topologically, residues 485–500 (RLKKFSMKGGKAWKLS) are cytoplasmic.

This sequence belongs to the TrkH potassium transport family. HKT (TC 2.A.38.3) subfamily.

Its subcellular location is the membrane. Functionally, probable cation transporter. May be involved in regulation of potassium-sodium homeostasis. The sequence is that of Probable cation transporter HKT1;4 from Oryza sativa subsp. japonica (Rice).